The sequence spans 73 residues: Putative antitoxin VapB38 (73 aa).

In terms of biological role, probable antitoxin component of a type II toxin-antitoxin (TA) system. Its putative cognate toxin is VapC38. The sequence is that of Putative antitoxin VapB38 (vapB38) from Mycobacterium tuberculosis (strain ATCC 25618 / H37Rv).